The chain runs to 394 residues: Protein-glutamate methylesterase/protein-glutamine glutaminase of group 2 operon (394 aa).

The Response regulatory domain maps to 21 to 139 (RVMVVDDSAV…ELTGADTFKR (119 aa)). Asp-72 is modified (4-aspartylphosphate). Residues 148–201 (LGAAARRSGPRREGTAAARPPGAAAQPTSGYTLPSPVRAKPETGPLTVRPLPPD) form a disordered region. Positions 162–172 (TAAARPPGAAA) are enriched in low complexity. The CheB-type methylesterase domain maps to 200 to 382 (PDGRPDVIAI…SAILPLKEIG (183 aa)). Residues Ser-212, His-238, and Asp-334 contribute to the active site.

This sequence belongs to the CheB family. Post-translationally, phosphorylated by CheA. Phosphorylation of the N-terminal regulatory domain activates the methylesterase activity.

The protein localises to the cytoplasm. The catalysed reaction is [protein]-L-glutamate 5-O-methyl ester + H2O = L-glutamyl-[protein] + methanol + H(+). It catalyses the reaction L-glutaminyl-[protein] + H2O = L-glutamyl-[protein] + NH4(+). Its function is as follows. Involved in chemotaxis. Part of a chemotaxis signal transduction system that modulates chemotaxis in response to various stimuli. Catalyzes the demethylation of specific methylglutamate residues introduced into the chemoreceptors (methyl-accepting chemotaxis proteins or MCP) by CheR. Also mediates the irreversible deamidation of specific glutamine residues to glutamic acid. This chain is Protein-glutamate methylesterase/protein-glutamine glutaminase of group 2 operon, found in Rhodospirillum centenum (strain ATCC 51521 / SW).